Consider the following 338-residue polypeptide: DNA-directed RNA polymerase subunit alpha (338 aa).

The tract at residues 1 to 225 is alpha N-terminal domain (alpha-NTD); sequence MLISQRPTIT…ELFGLARELN (225 aa). The segment at 242-338 is alpha C-terminal domain (alpha-CTD); sequence YIAAYSMPIE…YIDVEAEDSE (97 aa). A disordered region spans residues 319–338; that stretch reads LEGYDAETGGYIDVEAEDSE.

Belongs to the RNA polymerase alpha chain family. Homodimer. The RNAP catalytic core consists of 2 alpha, 1 beta, 1 beta' and 1 omega subunit. When a sigma factor is associated with the core the holoenzyme is formed, which can initiate transcription.

It catalyses the reaction RNA(n) + a ribonucleoside 5'-triphosphate = RNA(n+1) + diphosphate. Its function is as follows. DNA-dependent RNA polymerase catalyzes the transcription of DNA into RNA using the four ribonucleoside triphosphates as substrates. The chain is DNA-directed RNA polymerase subunit alpha from Corynebacterium glutamicum (strain ATCC 13032 / DSM 20300 / JCM 1318 / BCRC 11384 / CCUG 27702 / LMG 3730 / NBRC 12168 / NCIMB 10025 / NRRL B-2784 / 534).